The primary structure comprises 363 residues: Aminomethyltransferase (363 aa).

This sequence belongs to the GcvT family. As to quaternary structure, the glycine cleavage system is composed of four proteins: P, T, L and H.

It carries out the reaction N(6)-[(R)-S(8)-aminomethyldihydrolipoyl]-L-lysyl-[protein] + (6S)-5,6,7,8-tetrahydrofolate = N(6)-[(R)-dihydrolipoyl]-L-lysyl-[protein] + (6R)-5,10-methylene-5,6,7,8-tetrahydrofolate + NH4(+). In terms of biological role, the glycine cleavage system catalyzes the degradation of glycine. This chain is Aminomethyltransferase, found in Dechloromonas aromatica (strain RCB).